Here is a 211-residue protein sequence, read N- to C-terminus: Ribosomal RNA small subunit methyltransferase G (211 aa).

S-adenosyl-L-methionine is bound by residues Gly-72, Phe-77, 125-126 (IE), and Arg-141.

This sequence belongs to the methyltransferase superfamily. RNA methyltransferase RsmG family.

It localises to the cytoplasm. It catalyses the reaction guanosine(527) in 16S rRNA + S-adenosyl-L-methionine = N(7)-methylguanosine(527) in 16S rRNA + S-adenosyl-L-homocysteine. Specifically methylates the N7 position of guanine in position 527 of 16S rRNA. In Allorhizobium ampelinum (strain ATCC BAA-846 / DSM 112012 / S4) (Agrobacterium vitis (strain S4)), this protein is Ribosomal RNA small subunit methyltransferase G.